A 220-amino-acid chain; its full sequence is Demethylmenaquinone methyltransferase (220 aa).

S-adenosyl-L-methionine contacts are provided by residues Thr47, Asp67, and 93–94; that span reads DA.

This sequence belongs to the class I-like SAM-binding methyltransferase superfamily. MenG/UbiE family.

The catalysed reaction is a 2-demethylmenaquinol + S-adenosyl-L-methionine = a menaquinol + S-adenosyl-L-homocysteine + H(+). It functions in the pathway quinol/quinone metabolism; menaquinone biosynthesis; menaquinol from 1,4-dihydroxy-2-naphthoate: step 2/2. Its function is as follows. Methyltransferase required for the conversion of demethylmenaquinol (DMKH2) to menaquinol (MKH2). This Thermus thermophilus (strain ATCC BAA-163 / DSM 7039 / HB27) protein is Demethylmenaquinone methyltransferase.